We begin with the raw amino-acid sequence, 657 residues long: DALGTGNANKQQDINHLLDKIYEPTKYPDLKDIAENFNPLGDTSIYNDHGAAAEALMKELNDHRLLEQRHWFSLFNTRQREEALMLFAVLNQCKEWYCFRSNAAYFRERMNEGEFVYALYVSVIHSKLGDGIVLPPLYEITPHMFTNSEVIDKAYSAKMTQKPGTFNVSFTGTKKNREQRVAYFGEDIGMNIHHVTWHMDFPTWWQDSYGYHLDRKGELFFWVHHQLTARFDFERLSNWLDPVDELHWDRIIREGFAPLTSYKYGGEFPVRPDNIHFEDVDGVAHVHDLEITESRIHDAIDHGYITDSDGHTIDIRQPKGIELLGDIIESSMYSSNVQYYGSLHNTAHAMLGRQGDPHGKFNLPPGVMEHFETATRDPSFFRLHKYMDNIFKKHTDSFPPYTHDDLEFAGMVVDGIAIDGELITFFDEFQYSILNAVDSGENIEDVDINARVHRLNHNEFTYKITMSNNNDGERLATFRIFLCPIEDNNGITLTLDEARWFCIELDKFFQKVPSGPETIERSSKDSSVTVPDMPSFQSLKEQADNAVNGGHDLDLSAYERSCGIPDRMLLPKSKPEGMKFNLYVAVTDGDKDTEGHNGGHDYGGTHAQCGVHGEAFPDNRPLGYPLERRIPDERVIDGVSNIKHVVVKIVHHLEHHD.

Cysteines 93 and 98 form a disulfide. Asn167 is a glycosylation site (N-linked (GlcNAc...) asparagine). The Cu cation site is built by His194, His198, His224, His344, His348, and His384. Disulfide bonds link Cys483–Cys502 and Cys562–Cys609.

This sequence belongs to the tyrosinase family. Hemocyanin subfamily. As to quaternary structure, hexamer of a number of different chains, of which A, B, and C have been identified. In terms of tissue distribution, hemolymph.

Its subcellular location is the secreted. The protein localises to the extracellular space. Its function is as follows. Hemocyanins are copper-containing oxygen carriers occurring freely dissolved in the hemolymph of many mollusks and arthropods. The protein is Hemocyanin B chain of Panulirus interruptus (California spiny lobster).